The sequence spans 436 residues: MLDIKYLRKNVAEATRRLQDRGIESEKLTTLLSLDKARREAIQQVESLKAQRNEVSDKIAYAKRNKTDASEAILAMQEVGSKIKALDARQASLDMEVKNLAAHLPNLAASDVPVGPDEAANVEQRVWEPKTYGQRLKAHQEAPEWLKAHYEVGETLGILDFERGAKVSGARFLYYVGDGARLERAVYNFMLDEHRQEGYTEMITPIVVNDAAMFGTGQYPKFQDDAYRVEGLEQTYIPTAEVPLTNYYSGETLPAEDLPIKFTALSPSFRKEAGAAGKDTRGLIRLHQFNKVEMVKFTKPEQSYEELESMTANAENILQKLGLPYHVIMLSTGDMGFSAAKTYDVEVWMPQQQVYREISSVSNTEDFQARRMHITYRNEAGQLALVHTLNGSGLAVGRTVAAILENYQNPDGSVTVPEVLRPYLGGQDKLMATPHH.

L-serine is bound at residue 239–241 (TAE). 270–272 (RKE) is an ATP binding site. Glu293 lines the L-serine pocket. Position 357–360 (357–360 (EISS)) interacts with ATP. Ser392 is a binding site for L-serine.

It belongs to the class-II aminoacyl-tRNA synthetase family. Type-1 seryl-tRNA synthetase subfamily. As to quaternary structure, homodimer. The tRNA molecule binds across the dimer.

It localises to the cytoplasm. It carries out the reaction tRNA(Ser) + L-serine + ATP = L-seryl-tRNA(Ser) + AMP + diphosphate + H(+). It catalyses the reaction tRNA(Sec) + L-serine + ATP = L-seryl-tRNA(Sec) + AMP + diphosphate + H(+). It participates in aminoacyl-tRNA biosynthesis; selenocysteinyl-tRNA(Sec) biosynthesis; L-seryl-tRNA(Sec) from L-serine and tRNA(Sec): step 1/1. Its function is as follows. Catalyzes the attachment of serine to tRNA(Ser). Is also able to aminoacylate tRNA(Sec) with serine, to form the misacylated tRNA L-seryl-tRNA(Sec), which will be further converted into selenocysteinyl-tRNA(Sec). The protein is Serine--tRNA ligase of Leuconostoc citreum (strain KM20).